The following is a 212-amino-acid chain: Large ribosomal subunit protein mL48 (212 aa).

The transit peptide at 1–28 (MSGTLEKVLCLRNNTIFKQAFSLLRFRT) directs the protein to the mitochondrion. Lys199 carries the post-translational modification N6-succinyllysine.

The protein belongs to the mitochondrion-specific ribosomal protein mL48 family. As to quaternary structure, component of the mitochondrial large ribosomal subunit (mt-LSU). Mature mammalian 55S mitochondrial ribosomes consist of a small (28S) and a large (39S) subunit. The 28S small subunit contains a 12S ribosomal RNA (12S mt-rRNA) and 30 different proteins. The 39S large subunit contains a 16S rRNA (16S mt-rRNA), a copy of mitochondrial valine transfer RNA (mt-tRNA(Val)), which plays an integral structural role, and 52 different proteins. mL48 is located at the central protuberance. Interacts with OXA1L.

Its subcellular location is the mitochondrion. The sequence is that of Large ribosomal subunit protein mL48 (MRPL48) from Homo sapiens (Human).